The primary structure comprises 459 residues: MQKIETFWYFCLKHFKQELNGQQFNTWIKPLKLEICPDVENTLVLIAPNRFVLQWIKDNFVNRIDEMAQGHFNEKIHFKLELKDPAEIKTATIKAPEPKSKEDKKPPTDKAHGTTARKTNPSRLNPAFTFDAFVTGKANQLARAGAIQVAERPGIAYNPLFIYGGVGLGKTHLMHAVGNYVMELDAGAKIRYVHAEKYVSDVVSAYQHKSFDKFKLYYHSLDLLLVDDVQFFSGKNRTQEEFFYAFNALIEAHKQVIITSDCYPKEISGLEERLVSRFGWGLTVAIEPPELEMRVAILLKKAFIEKIELDESTAFFIAKYIRSNVRELEGALKRVLAYSRFTGHPISLDLAKEALKDLLAIQNRQISIENIQKTVADYYKIKVADMYSKKRVRAIARPRQVAMAIAKELTQLSLPDIGEAFGGRDHTTVLHAHRKIVELRASDPGINRDYSTLIHILRG.

Residues 1 to 74 (MQKIETFWYF…DEMAQGHFNE (74 aa)) form a domain I, interacts with DnaA modulators region. The domain II stretch occupies residues 74-122 (EKIHFKLELKDPAEIKTATIKAPEPKSKEDKKPPTDKAHGTTARKTNPS). The disordered stretch occupies residues 91 to 123 (ATIKAPEPKSKEDKKPPTDKAHGTTARKTNPSR). The span at 96 to 112 (PEPKSKEDKKPPTDKAH) shows a compositional bias: basic and acidic residues. The segment at 123–339 (RLNPAFTFDA…GALKRVLAYS (217 aa)) is domain III, AAA+ region. Positions 167, 169, 170, and 171 each coordinate ATP. Positions 340-459 (RFTGHPISLD…YSTLIHILRG (120 aa)) are domain IV, binds dsDNA.

It belongs to the DnaA family. Oligomerizes as a right-handed, spiral filament on DNA at oriC.

The protein localises to the cytoplasm. Functionally, plays an essential role in the initiation and regulation of chromosomal replication. ATP-DnaA binds to the origin of replication (oriC) to initiate formation of the DNA replication initiation complex once per cell cycle. Binds the DnaA box (a 9 base pair repeat at the origin) and separates the double-stranded (ds)DNA. Forms a right-handed helical filament on oriC DNA; dsDNA binds to the exterior of the filament while single-stranded (ss)DNA is stabiized in the filament's interior. The ATP-DnaA-oriC complex binds and stabilizes one strand of the AT-rich DNA unwinding element (DUE), permitting loading of DNA polymerase. After initiation quickly degrades to an ADP-DnaA complex that is not apt for DNA replication. Binds acidic phospholipids. This chain is Chromosomal replication initiator protein DnaA, found in Nitrosomonas eutropha (strain DSM 101675 / C91 / Nm57).